The sequence spans 506 residues: Probable cytosol aminopeptidase (506 aa).

The Mn(2+) site is built by Lys278 and Asp283. Residue Lys290 is part of the active site. Mn(2+)-binding residues include Asp301, Asp360, and Glu362. The active site involves Arg364.

It belongs to the peptidase M17 family. Requires Mn(2+) as cofactor.

The protein localises to the cytoplasm. It carries out the reaction Release of an N-terminal amino acid, Xaa-|-Yaa-, in which Xaa is preferably Leu, but may be other amino acids including Pro although not Arg or Lys, and Yaa may be Pro. Amino acid amides and methyl esters are also readily hydrolyzed, but rates on arylamides are exceedingly low.. The catalysed reaction is Release of an N-terminal amino acid, preferentially leucine, but not glutamic or aspartic acids.. Presumably involved in the processing and regular turnover of intracellular proteins. Catalyzes the removal of unsubstituted N-terminal amino acids from various peptides. In Ralstonia nicotianae (strain ATCC BAA-1114 / GMI1000) (Ralstonia solanacearum), this protein is Probable cytosol aminopeptidase.